Here is a 496-residue protein sequence, read N- to C-terminus: Acetyltransferase adrJ (496 aa).

Active-site proton acceptor residues include histidine 174 and aspartate 421.

This sequence belongs to the plant acyltransferase family. In terms of assembly, monomer.

It participates in secondary metabolite biosynthesis; terpenoid biosynthesis. Its function is as follows. Acetyltransferase; part of the gene cluster that mediates the biosynthesis of andrastins, meroterpenoid compounds that exhibit inhibitory activity against ras farnesyltransferase, suggesting that they could be promising leads for antitumor agents. The first step of the pathway is the synthesis of 3,5-dimethylorsellinic acid (DMOA) by the polyketide synthase adrD via condensation of one acetyl-CoA starter unit with 3 malonyl-CoA units and 2 methylations. DMAO is then converted to farnesyl-DMAO by the prenyltransferase adrG. The methyltransferase adrK catalyzes the methylation of the carboxyl group of farnesyl-DMAO to farnesyl-DMAO methyl ester which is further converted to epoxyfarnesyl-DMAO methyl ester by the FAD-dependent monooxygenase adrH. The terpene cyclase adrI then catalyzes the carbon skeletal rearrangement to generate the andrastin E, the first compound in the pathway having the andrastin scaffold, with the tetracyclic ring system. The post-cyclization tailoring enzymes adrF, adrE, adrJ, and adrA, are involved in the conversion of andrastin E into andrastin A. The short chain dehydrogenase adrF is responsible for the oxidation of the C-3 a hydroxyl group of andrastin E to yield the corresponding ketone, andrastin D. The ketoreductase adrE stereoselectively reduces the carbonyl moiety to reverse the stereochemistry of the C-3 position to yield andrastin F. The acetyltransferase adrJ is the acetyltransferase that attaches the acetyl group to the C-3 hydroxyl group of andrastin F to yield andrastin C. Finally, the cytochrome P450 monooxygenase adrA catalyzes two sequential oxidation reactions of the C-23 methyl group, to generate the corresponding alcohol andrastin B, and aldehyde andrastin A. This chain is Acetyltransferase adrJ, found in Penicillium roqueforti.